Here is a 104-residue protein sequence, read N- to C-terminus: uncharacterized protein (104 aa).

2 helical membrane-spanning segments follow: residues 47–67 (IDHR…LAML) and 72–92 (VGHV…FVLA).

To M.leprae ML1584.

The protein resides in the cell membrane. This is an uncharacterized protein from Mycobacterium tuberculosis (strain CDC 1551 / Oshkosh).